The following is a 1040-amino-acid chain: MQDNVPASGGGPSRLFILRPVATTLLMIAILLAGIIGYRALPVSALPEVDYPTIQVITLYPGASPDVVTSAITAPLERQFGQMSGLKQMSTQSAGGASVITLQFQLELSLDVAEQDVQAAINAASNLLPNDLPYPPTYSKVNPADPPIMTLAVTSSAMSMTQVQDMVDNRIAQKISQVAGVGLVSLAGGQRPAVRVRLNAPALAAYGLTSETIRTAITAANVNSAKGSLDGPTRSVTLSANDQMKSVDDYRKLIVAWKNGAPVRLQDVATIEQAAENIYLGAWANRQQAIIINVQRQPGANVITTTDSINKMLPALKASLPNSVEVATLTDRTTSIRASVKDVQFELLLAIALVVMVIYLFLRNAVATLIPSIAVPLSLVGTFAAMYFLGFSINNLTLMALTIATGFVVDDAIVVIENIARYIEKGEKPLNAALKGAGEIGFTIISLTFSLIAVLIPLLFMGDIVGRLFREFAVTLAVSILISAVVSLTLTPMMCARMLSHQSLRKQNRFTRASERFFTRLIDTYGTWLRKVLNHPWLTLSVALGTLLLTILLYIWIPKGFFPIQDNGIIQGTVQAPQTVSFSNMADRQQRVASIIMKDPTVESVSSFIGVDGTNAALNSGRLQINLKPLSERSERIPEIISRLQQQTAQIPGIQLYLQPVQDLTIDTQISRTQYQFTLQAMSLDELSVWVPKLMTELKKLPQLEDVSSDWQDGAAVAYVNVDRDSASRLGITMSQVDSALYNAFGQRLVSTIYTQASQYRVVLEHDTTNNTGLDALNDVRLISSDGGTIPLSSIATIEERQGPLAINHIDQFPSTTISFNVASGYALGEAVDAITQAEQQMNLPADITTRFQGSTLAFQSALSSTVWLIVAAIVAMYIVLGVLYESFIHPITILSTLPTAGVGALLALMMAGKDLDVIAIIGIILLIGIVKKNAIMMIDFALAAEREQGMKPYDAIYQACLLRFRPILMTTMAALLSALPLMLSTGVGAELRQPLGVCMVGGLIMSQILTLFTTPVIYLLFDRLATRFRRVPRQEEETE.

Transmembrane regions (helical) follow at residues 15–37 (LFIL…GIIG), 343–365 (VQFE…LRNA), 369–391 (LIPS…FLGF), 398–420 (LMAL…ENIA), 440–462 (IGFT…LFMG), 474–496 (VTLA…MMCA), 535–557 (HPWL…YIWI), 867–889 (VWLI…ESFI), 909–931 (LMMA…IGIV), 968–990 (ILMT…GVGA), and 1000–1022 (MVGG…YLLF).

Belongs to the resistance-nodulation-cell division (RND) (TC 2.A.6) family. MdtB subfamily. In terms of assembly, part of a tripartite efflux system composed of MdtA, MdtB and MdtC. MdtB forms a heteromultimer with MdtC.

The protein localises to the cell inner membrane. The chain is Multidrug resistance protein MdtB from Pectobacterium atrosepticum (strain SCRI 1043 / ATCC BAA-672) (Erwinia carotovora subsp. atroseptica).